Here is a 418-residue protein sequence, read N- to C-terminus: FAD-dependent monooxygenase fmqB (418 aa).

Residues Val12 and Arg68 each coordinate FAD. Arg147 is an active-site residue. Residues Asp272 and Gly285 each coordinate FAD.

The protein belongs to the paxM FAD-dependent monooxygenase family.

The protein localises to the cytoplasm. It participates in alkaloid biosynthesis. FAD-dependent monooxygenase; part of the gene cluster that mediates the biosynthesis of the antitumor fumiquinazolines that confer a dual-usage capability to defend against phagocytes in the environment and animal hosts. The simplest member is fumiquinazoline F (FQF) with a 6-6-6 tricyclic core derived from anthranilic acid (Ant), tryptophan (Trp), and alanine (Ala). The trimodular NRPS fmqA is responsible for FQF formation. Modules 1, 2 and 3 of fmqA are predicted to activate and load Ant, Trp and Ala, respectively, providing for the assembly of an Ant-Trp-Ala-S-enzyme intermediate that would undergo double cyclization for chain release and generation of the tricyclic 6-6-6 product fumiquinazoline F. The presence of an E domain predicted for module 2 of fmqA is consistent with epimerization of L-Trp to D-Trp during assembly to generate the R-stereocenter at C14 of FQF. The FAD-dependent monooxygenase fmqB and the monomodular NRPS fmqC then maturate FQF to FQA. FmqB oxidizes the 2',3'-double bond of the indole side chain of FQF, and fmqC activates L-Ala as the adenylate, installs it as the pantetheinyl thioester on its carrier protein domain, and acylates the oxidized indole for subsequent intramolecular cyclization to create the 6-5-5-imidazolindolone of FQA. The FAD-linked oxidoreductase fmqD introduces a third layer of scaffold complexity by converting FQA to the spirohemiaminal FQC, presumably by catalyzing the formation of a transient imine within the pyrazinone ring. FQC subsequently converts nonenzymatically to the known cyclic aminal FQD. The protein is FAD-dependent monooxygenase fmqB of Aspergillus fumigatus (strain ATCC MYA-4609 / CBS 101355 / FGSC A1100 / Af293) (Neosartorya fumigata).